A 246-amino-acid chain; its full sequence is Uridylate kinase (246 aa).

16–19 (KFSG) contributes to the ATP binding site. Gly-58 contributes to the UMP binding site. The ATP site is built by Gly-59 and Arg-63. UMP contacts are provided by residues Asp-78 and 139–146 (TGNPFFTT). 3 residues coordinate ATP: Thr-166, Tyr-172, and Asp-175.

The protein belongs to the UMP kinase family. As to quaternary structure, homohexamer.

It localises to the cytoplasm. The catalysed reaction is UMP + ATP = UDP + ADP. Its pathway is pyrimidine metabolism; CTP biosynthesis via de novo pathway; UDP from UMP (UMPK route): step 1/1. Inhibited by UTP. In terms of biological role, catalyzes the reversible phosphorylation of UMP to UDP. The sequence is that of Uridylate kinase from Legionella pneumophila (strain Corby).